The sequence spans 113 residues: Histone H3-8 (113 aa).

Positions 1 to 17 (NTGAKAPRKHLANKAAR) are enriched in basic residues. Positions 1–31 (NTGAKAPRKHLANKAARKTAAPANAGIKKPH) are disordered.

This sequence belongs to the histone H3 family. In terms of assembly, the nucleosome is a histone octamer containing two molecules each of H2A, H2B, H3 and H4 assembled in one H3-H4 heterotetramer and two H2A-H2B heterodimers. The octamer wraps approximately 147 bp of DNA.

It is found in the nucleus. The protein resides in the chromosome. Its function is as follows. Core component of nucleosome. Nucleosomes wrap and compact DNA into chromatin, limiting DNA accessibility to the cellular machineries which require DNA as a template. Histones thereby play a central role in transcription regulation, DNA repair, DNA replication and chromosomal stability. DNA accessibility is regulated via a complex set of post-translational modifications of histones, also called histone code, and nucleosome remodeling. The polypeptide is Histone H3-8 (H3-8) (Stylonychia lemnae (Ciliate)).